The primary structure comprises 729 residues: Polyribonucleotide nucleotidyltransferase (729 aa).

The tract at residues 399-419 (YMHNYNFPPYSTGETGRVGSP) is disordered. Asp-509 and Asp-515 together coordinate Mg(2+). Residues 575–634 (PRVISVKIPVDKIGEVIGPKGKMINQIQADSGAEITVEDDGTIYIGAADGPAAETARSAI) enclose the KH domain. Positions 646–718 (GERYLGTIVK…ARGKISLAPG (73 aa)) constitute an S1 motif domain.

This sequence belongs to the polyribonucleotide nucleotidyltransferase family. Mg(2+) is required as a cofactor.

Its subcellular location is the cytoplasm. It carries out the reaction RNA(n+1) + phosphate = RNA(n) + a ribonucleoside 5'-diphosphate. Its function is as follows. Involved in mRNA degradation. Catalyzes the phosphorolysis of single-stranded polyribonucleotides processively in the 3'- to 5'-direction. The chain is Polyribonucleotide nucleotidyltransferase from Parafrankia sp. (strain EAN1pec).